Consider the following 40-residue polypeptide: Serine proteinase-like BMK-CBP (40 aa).

A Peptidase S1 domain is found at 1-40; that stretch reads IFGGTFAKNGEYPWMVVIDLPEFACGGVLISKKFVLTAAH. Histidine 40 (charge relay system) is an active-site residue.

Belongs to the peptidase S1 family. Expressed by the venom gland.

It is found in the secreted. Its function is as follows. Binds in a dose-dependent manner to the breast cancer cell line MCF-7. The chain is Serine proteinase-like BMK-CBP from Olivierus martensii (Manchurian scorpion).